The following is a 116-amino-acid chain: Aspartate 1-decarboxylase (116 aa).

The active-site Schiff-base intermediate with substrate; via pyruvic acid is the S25. S25 carries the post-translational modification Pyruvic acid (Ser). Substrate is bound at residue T57. Y58 (proton donor) is an active-site residue. Substrate is bound at residue 72-74; that stretch reads GAA.

Belongs to the PanD family. Heterooctamer of four alpha and four beta subunits. The cofactor is pyruvate. Post-translationally, is synthesized initially as an inactive proenzyme, which is activated by self-cleavage at a specific serine bond to produce a beta-subunit with a hydroxyl group at its C-terminus and an alpha-subunit with a pyruvoyl group at its N-terminus.

It localises to the cytoplasm. It carries out the reaction L-aspartate + H(+) = beta-alanine + CO2. The protein operates within cofactor biosynthesis; (R)-pantothenate biosynthesis; beta-alanine from L-aspartate: step 1/1. Its function is as follows. Catalyzes the pyruvoyl-dependent decarboxylation of aspartate to produce beta-alanine. This Helicobacter pylori (strain HPAG1) protein is Aspartate 1-decarboxylase.